The primary structure comprises 148 residues: Gas vesicle protein J (148 aa).

Disordered stretches follow at residues 1-21 and 118-148; these read MTTT…VIPT and EETT…QLEA. Polar residues predominate over residues 136-148; it reads VNSQEGDNSQLEA.

Belongs to the gas vesicle GvpA family. Interacts with GvpA.

Its subcellular location is the gas vesicle. In terms of biological role, a minor component of the gas vesicle, might be involved in nucleating gas vesicle formation. Gas vesicles (GV) are hollow, gas filled proteinaceous nanostructures. During planktonic growth they allow positioning of the organism at a favorable depth for light or nutrient acquisition. Its function is as follows. Cluster expression in E.coli (gvpA1-gvpA2-gvpC-gvpN-gvpJ-gvpK-gvpF-gvpG-gvpV-gvpW) allows cells to float and produces irregularly shaped gas vesicles. The polypeptide is Gas vesicle protein J (Nostoc sp. (strain PCC 7120 / SAG 25.82 / UTEX 2576)).